The following is a 615-amino-acid chain: (+)-alpha-pinene synthase TPS2, chloroplastic (615 aa).

A chloroplast-targeting transit peptide spans 1 to 55; the sequence is MHCMAVRHFAPSSSLSIFSSTNINNHFFGREIFTPKTSNITTKKSRSRPNCNPIQ. The (2E)-geranyl diphosphate site is built by Arg-330, Asp-367, Asp-371, Arg-509, and Asp-512. Positions 367 and 371 each coordinate Mg(2+). A DDXXD motif motif is present at residues 367–371; that stretch reads DDIYD. Asp-512, Thr-516, and Glu-520 together coordinate Mg(2+).

This sequence belongs to the terpene synthase family. Tpsb subfamily. The cofactor is Mg(2+). It depends on Mn(2+) as a cofactor. Requires K(+) as cofactor. Trichome.

The protein localises to the plastid. Its subcellular location is the chloroplast. It catalyses the reaction (2E)-geranyl diphosphate = (1R,5R)-alpha-pinene + diphosphate. The enzyme catalyses (2E)-geranyl diphosphate = (1R,5R)-beta-pinene + diphosphate. It carries out the reaction (2E)-geranyl diphosphate = (4S)-limonene + diphosphate. The catalysed reaction is (2E)-geranyl diphosphate = beta-myrcene + diphosphate. Its pathway is secondary metabolite biosynthesis; terpenoid biosynthesis. The protein operates within terpene metabolism; (-)-alpha-pinene biosynthesis; (-)-alpha-pinene from geranyl diphosphate: step 1/1. Involved in monoterpene (C10) olefins biosynthesis, constituants of cannabinoids and terpenoids-rich resins. Catalyzes mainly the conversion of (2E)-geranyl diphosphate to (+)-alpha-pinene, and also produces minor products such as (-)-limonene, (+)-beta-pinene and beta-myrcene. The polypeptide is (+)-alpha-pinene synthase TPS2, chloroplastic (Cannabis sativa (Hemp)).